We begin with the raw amino-acid sequence, 90 residues long: Probable Fe(2+)-trafficking protein (90 aa).

Belongs to the Fe(2+)-trafficking protein family.

In terms of biological role, could be a mediator in iron transactions between iron acquisition and iron-requiring processes, such as synthesis and/or repair of Fe-S clusters in biosynthetic enzymes. The protein is Probable Fe(2+)-trafficking protein of Pseudomonas entomophila (strain L48).